Reading from the N-terminus, the 270-residue chain is Energy-coupling factor transporter ATP-binding protein EcfA (270 aa).

The ABC transporter domain occupies valine 5 to alanine 238. Glycine 38 to serine 45 is a binding site for ATP.

It belongs to the ABC transporter superfamily. Energy-coupling factor EcfA family. As to quaternary structure, forms a stable energy-coupling factor (ECF) transporter complex composed of 2 membrane-embedded substrate-binding proteins (S component), 2 ATP-binding proteins (A component) and 2 transmembrane proteins (T component).

The protein localises to the cell membrane. ATP-binding (A) component of a common energy-coupling factor (ECF) ABC-transporter complex. Unlike classic ABC transporters this ECF transporter provides the energy necessary to transport a number of different substrates. This chain is Energy-coupling factor transporter ATP-binding protein EcfA, found in Carboxydothermus hydrogenoformans (strain ATCC BAA-161 / DSM 6008 / Z-2901).